Reading from the N-terminus, the 317-residue chain is Transaldolase (317 aa).

Lys-132 functions as the Schiff-base intermediate with substrate in the catalytic mechanism.

The protein belongs to the transaldolase family. Type 1 subfamily. As to quaternary structure, homodimer.

It is found in the cytoplasm. It catalyses the reaction D-sedoheptulose 7-phosphate + D-glyceraldehyde 3-phosphate = D-erythrose 4-phosphate + beta-D-fructose 6-phosphate. Its pathway is carbohydrate degradation; pentose phosphate pathway; D-glyceraldehyde 3-phosphate and beta-D-fructose 6-phosphate from D-ribose 5-phosphate and D-xylulose 5-phosphate (non-oxidative stage): step 2/3. Functionally, transaldolase is important for the balance of metabolites in the pentose-phosphate pathway. The polypeptide is Transaldolase (Shewanella amazonensis (strain ATCC BAA-1098 / SB2B)).